The chain runs to 331 residues: 4-hydroxythreonine-4-phosphate dehydrogenase (331 aa).

The substrate site is built by His-137 and Thr-138. The a divalent metal cation site is built by His-167, His-212, and His-267. Substrate contacts are provided by Lys-275, Asn-284, and Arg-293.

Belongs to the PdxA family. As to quaternary structure, homodimer. Zn(2+) serves as cofactor. It depends on Mg(2+) as a cofactor. Co(2+) is required as a cofactor.

It localises to the cytoplasm. The catalysed reaction is 4-(phosphooxy)-L-threonine + NAD(+) = 3-amino-2-oxopropyl phosphate + CO2 + NADH. Its pathway is cofactor biosynthesis; pyridoxine 5'-phosphate biosynthesis; pyridoxine 5'-phosphate from D-erythrose 4-phosphate: step 4/5. Catalyzes the NAD(P)-dependent oxidation of 4-(phosphooxy)-L-threonine (HTP) into 2-amino-3-oxo-4-(phosphooxy)butyric acid which spontaneously decarboxylates to form 3-amino-2-oxopropyl phosphate (AHAP). This Yersinia pseudotuberculosis serotype I (strain IP32953) protein is 4-hydroxythreonine-4-phosphate dehydrogenase.